The chain runs to 151 residues: Small ribosomal subunit protein uS13 (151 aa).

Residues Arg-131–Gln-151 form a disordered region. A compositionally biased stretch (basic residues) spans Gln-133–Gln-151.

It belongs to the universal ribosomal protein uS13 family. In terms of assembly, part of the 30S ribosomal subunit. Forms a loose heterodimer with protein S19. Forms two bridges to the 50S subunit in the 70S ribosome.

In terms of biological role, located at the top of the head of the 30S subunit, it contacts several helices of the 16S rRNA. In the 70S ribosome it contacts the 23S rRNA (bridge B1a) and protein L5 of the 50S subunit (bridge B1b), connecting the 2 subunits; these bridges are implicated in subunit movement. The protein is Small ribosomal subunit protein uS13 of Methanopyrus kandleri (strain AV19 / DSM 6324 / JCM 9639 / NBRC 100938).